The following is a 230-amino-acid chain: LexA repressor (230 aa).

Residues 1–21 form a disordered region; the sequence is MSDDSSETRTGGRRGADAGLT. Residues 44-64 constitute a DNA-binding region (H-T-H motif); the sequence is IREIGDAVGLTSTSSVAHQLR. Residues serine 154 and lysine 191 each act as for autocatalytic cleavage activity in the active site.

The protein belongs to the peptidase S24 family. In terms of assembly, homodimer.

The enzyme catalyses Hydrolysis of Ala-|-Gly bond in repressor LexA.. Its function is as follows. Represses a number of genes involved in the response to DNA damage (SOS response), including recA and lexA. In the presence of single-stranded DNA, RecA interacts with LexA causing an autocatalytic cleavage which disrupts the DNA-binding part of LexA, leading to derepression of the SOS regulon and eventually DNA repair. The chain is LexA repressor from Mycobacterium sp. (strain JLS).